The primary structure comprises 284 residues: ATP synthase gamma chain (284 aa).

It belongs to the ATPase gamma chain family. In terms of assembly, F-type ATPases have 2 components, CF(1) - the catalytic core - and CF(0) - the membrane proton channel. CF(1) has five subunits: alpha(3), beta(3), gamma(1), delta(1), epsilon(1). CF(0) has three main subunits: a, b and c.

Its subcellular location is the cell membrane. In terms of biological role, produces ATP from ADP in the presence of a proton gradient across the membrane. The gamma chain is believed to be important in regulating ATPase activity and the flow of protons through the CF(0) complex. In Pelotomaculum thermopropionicum (strain DSM 13744 / JCM 10971 / SI), this protein is ATP synthase gamma chain.